The sequence spans 299 residues: ATP phosphoribosyltransferase (299 aa).

It belongs to the ATP phosphoribosyltransferase family. Long subfamily. The cofactor is Mg(2+).

The protein localises to the cytoplasm. The catalysed reaction is 1-(5-phospho-beta-D-ribosyl)-ATP + diphosphate = 5-phospho-alpha-D-ribose 1-diphosphate + ATP. Its pathway is amino-acid biosynthesis; L-histidine biosynthesis; L-histidine from 5-phospho-alpha-D-ribose 1-diphosphate: step 1/9. With respect to regulation, feedback inhibited by histidine. In terms of biological role, catalyzes the condensation of ATP and 5-phosphoribose 1-diphosphate to form N'-(5'-phosphoribosyl)-ATP (PR-ATP). Has a crucial role in the pathway because the rate of histidine biosynthesis seems to be controlled primarily by regulation of HisG enzymatic activity. This is ATP phosphoribosyltransferase from Campylobacter lari (strain RM2100 / D67 / ATCC BAA-1060).